Here is a 476-residue protein sequence, read N- to C-terminus: MAKLARASALQFGANVTQTFVGAIITIYVINELGVGAFGIFALSAALVKWASIPAVGIRGAVITRMNESDDISPSEYFTTASVLTGAIILVGLLALLGYSPFVEQYLDYSGTQLVGGMFVSNVSFRLVLGGLRGENRVEMSSLYEALWGILSSLVKLALVYTGVGVDALFYGEITSSIVIGIFGVYSLNISFVSPTRSAAISLYSWARYGWLDNLKRMSYSWLDTIILGFFVSTSLVGIYEVAWRISALFVLLPTAISKSTFPTISSLRDTDKLNKVRRILTRGLSVAGVLAIPGLVGSVLVGGDILALYGPSVSSVGVAVSVLVSLSVVRLVECYETLVMQALNALDLPDRTFRIGVIFITTNIILNVSLIPMFGVIGAAIATLLSMTLGSILAVRALPKAVQTLPPVSAIGSQFVSAGAMAVVLFTILNYRPIGQPIEVVLYVLAGATTYGFVLLSLSSNFRERVQQLLSESLG.

The next 14 membrane-spanning stretches (helical) occupy residues 7-29, 34-56, 83-103, 112-132, 146-166, 168-188, 222-242, 246-266, 287-307, 310-330, 354-373, 377-396, 409-429, and 439-459; these read ASAL…TIYV, GVGA…IPAV, VLTG…SPFV, TQLV…LGGL, ALWG…GVGV, ALFY…VYSL, WLDT…IYEV, ISAL…PTIS, VAGV…GDIL, YGPS…LSVV, FRIG…SLIP, VIGA…ILAV, VSAI…LFTI, and IEVV…LLSL.

The protein belongs to the AglR/Agl15 family.

Its subcellular location is the cell membrane. It functions in the pathway cell surface structure biogenesis; S-layer biogenesis. Its function is as follows. Involved in the assembly of a N-linked pentasaccharide that decorates the S-layer glycoprotein and flagellins. Probably mediates or contributes to the translocation of the dolichol-phosphate-mannose across the membrane. This is Probable flippase AglR (aglR) from Haloferax volcanii (strain ATCC 29605 / DSM 3757 / JCM 8879 / NBRC 14742 / NCIMB 2012 / VKM B-1768 / DS2) (Halobacterium volcanii).